A 95-amino-acid polypeptide reads, in one-letter code: Aspartyl/glutamyl-tRNA(Asn/Gln) amidotransferase subunit C (95 aa).

Belongs to the GatC family. In terms of assembly, heterotrimer of A, B and C subunits.

The enzyme catalyses L-glutamyl-tRNA(Gln) + L-glutamine + ATP + H2O = L-glutaminyl-tRNA(Gln) + L-glutamate + ADP + phosphate + H(+). The catalysed reaction is L-aspartyl-tRNA(Asn) + L-glutamine + ATP + H2O = L-asparaginyl-tRNA(Asn) + L-glutamate + ADP + phosphate + 2 H(+). Its function is as follows. Allows the formation of correctly charged Asn-tRNA(Asn) or Gln-tRNA(Gln) through the transamidation of misacylated Asp-tRNA(Asn) or Glu-tRNA(Gln) in organisms which lack either or both of asparaginyl-tRNA or glutaminyl-tRNA synthetases. The reaction takes place in the presence of glutamine and ATP through an activated phospho-Asp-tRNA(Asn) or phospho-Glu-tRNA(Gln). In Paracoccus denitrificans (strain Pd 1222), this protein is Aspartyl/glutamyl-tRNA(Asn/Gln) amidotransferase subunit C.